The sequence spans 163 residues: MCVVKTTLIDSYAAQCWKCLKVRSIESQEDYEEIRSKTLEKFFECKRCEEPGDMVMNFDSLTMRWFQDEHSIPKTPQGLKRVLVVRTNCVKVDVYYESLAPRRKRFKSIKEVATFIEDKEEFKDMTLEEVSFAAPKRLKLKKKPVDSHSSSRNTEEDGVSRDA.

The CW-type zinc-finger motif lies at 6 to 56 (TTLIDSYAAQCWKCLKVRSIESQEDYEEIRSKTLEKFFECKRCEEPGDMVM). The region spanning 65–137 (WFQDEHSIPK…EEVSFAAPKR (73 aa)) is the MBD domain. Positions 140 to 163 (LKKKPVDSHSSSRNTEEDGVSRDA) are disordered. Residues 153–163 (NTEEDGVSRDA) show a composition bias toward basic and acidic residues.

It localises to the nucleus. Functionally, probable transcriptional regulator. This Arabidopsis thaliana (Mouse-ear cress) protein is Methyl-CpG-binding domain-containing protein 3 (MBD3).